A 616-amino-acid chain; its full sequence is Dihydroxy-acid dehydratase (616 aa).

Asp81 contributes to the Mg(2+) binding site. Residue Cys122 participates in [2Fe-2S] cluster binding. 2 residues coordinate Mg(2+): Asp123 and Lys124. Lys124 is subject to N6-carboxylysine. [2Fe-2S] cluster is bound at residue Cys195. Glu491 provides a ligand contact to Mg(2+). Ser517 (proton acceptor) is an active-site residue.

It belongs to the IlvD/Edd family. In terms of assembly, homodimer. [2Fe-2S] cluster is required as a cofactor. It depends on Mg(2+) as a cofactor.

The catalysed reaction is (2R)-2,3-dihydroxy-3-methylbutanoate = 3-methyl-2-oxobutanoate + H2O. It carries out the reaction (2R,3R)-2,3-dihydroxy-3-methylpentanoate = (S)-3-methyl-2-oxopentanoate + H2O. It functions in the pathway amino-acid biosynthesis; L-isoleucine biosynthesis; L-isoleucine from 2-oxobutanoate: step 3/4. It participates in amino-acid biosynthesis; L-valine biosynthesis; L-valine from pyruvate: step 3/4. Its function is as follows. Functions in the biosynthesis of branched-chain amino acids. Catalyzes the dehydration of (2R,3R)-2,3-dihydroxy-3-methylpentanoate (2,3-dihydroxy-3-methylvalerate) into 2-oxo-3-methylpentanoate (2-oxo-3-methylvalerate) and of (2R)-2,3-dihydroxy-3-methylbutanoate (2,3-dihydroxyisovalerate) into 2-oxo-3-methylbutanoate (2-oxoisovalerate), the penultimate precursor to L-isoleucine and L-valine, respectively. The chain is Dihydroxy-acid dehydratase from Sodalis glossinidius (strain morsitans).